We begin with the raw amino-acid sequence, 33 residues long: Protamine-2C (33 aa).

Residues 1-33 form a disordered region; it reads MPRRRRSSRRPVRRRRRPRVSRRRRRRGGRRRR.

Testis.

Its subcellular location is the nucleus. The protein localises to the chromosome. In terms of biological role, protamines substitute for histones in the chromatin of sperm during the haploid phase of spermatogenesis. They compact sperm DNA into a highly condensed, stable and inactive complex. In Oncorhynchus mykiss (Rainbow trout), this protein is Protamine-2C.